A 561-amino-acid polypeptide reads, in one-letter code: Guanine nucleotide-binding protein-like 3 (561 aa).

The segment covering 28-46 (HNRKLKKAAKKQGISRKAK) has biased composition (basic residues). Disordered stretches follow at residues 28–58 (HNRK…APFK) and 76–110 (KEQN…KKAK). Residues 53 to 98 (NSAPFKEEVLREAEQRKQELETLKEQNKIVKQQEKAAKRKKEKDAA) are a coiled coil. A compositionally biased stretch (basic and acidic residues) spans 76 to 88 (KEQNKIVKQQEKA). One can recognise a CP-type G domain in the interval 133–319 (CQELNKVIEA…MIDSPGILAA (187 aa)). GTP is bound by residues 181–184 (NKID), 268–275 (GFPNVGKS), and 312–315 (DSPG). Residues 486 to 532 (ATTTDAEEEKMDTTTNTDEPEAESHISSTVEPIQEPTEKRKDKPAKE) are disordered. The span at 521–532 (PTEKRKDKPAKE) shows a compositional bias: basic and acidic residues.

It belongs to the TRAFAC class YlqF/YawG GTPase family.

The protein resides in the nucleus. It localises to the nucleolus. May play a role in regulating cellular proliferation. This is Guanine nucleotide-binding protein-like 3 (gnl3) from Danio rerio (Zebrafish).